Reading from the N-terminus, the 1410-residue chain is DNA-directed RNA polymerase subunit beta' (1410 aa).

Zn(2+)-binding residues include Cys70, Cys72, Cys85, and Cys88. Residues Asp460, Asp462, and Asp464 each contribute to the Mg(2+) site. Zn(2+)-binding residues include Cys814, Cys888, Cys895, and Cys898.

This sequence belongs to the RNA polymerase beta' chain family. The RNAP catalytic core consists of 2 alpha, 1 beta, 1 beta' and 1 omega subunit. When a sigma factor is associated with the core the holoenzyme is formed, which can initiate transcription. The cofactor is Mg(2+). Zn(2+) is required as a cofactor.

It catalyses the reaction RNA(n) + a ribonucleoside 5'-triphosphate = RNA(n+1) + diphosphate. DNA-dependent RNA polymerase catalyzes the transcription of DNA into RNA using the four ribonucleoside triphosphates as substrates. This chain is DNA-directed RNA polymerase subunit beta', found in Saccharophagus degradans (strain 2-40 / ATCC 43961 / DSM 17024).